A 488-amino-acid chain; its full sequence is N-succinylglutamate 5-semialdehyde dehydrogenase (488 aa).

An NAD(+)-binding site is contributed by 221–226 (GSSRTG). Catalysis depends on residues glutamate 244 and cysteine 278.

Belongs to the aldehyde dehydrogenase family. AstD subfamily.

The catalysed reaction is N-succinyl-L-glutamate 5-semialdehyde + NAD(+) + H2O = N-succinyl-L-glutamate + NADH + 2 H(+). Its pathway is amino-acid degradation; L-arginine degradation via AST pathway; L-glutamate and succinate from L-arginine: step 4/5. Functionally, catalyzes the NAD-dependent reduction of succinylglutamate semialdehyde into succinylglutamate. This is N-succinylglutamate 5-semialdehyde dehydrogenase from Pseudomonas syringae pv. syringae (strain B728a).